The chain runs to 637 residues: MIKITLKDGKVLEVEKGLTVSEIAARISTSLRKKALGAKINGEKAELMDVINEDSTLEILTFEDQEGKDTLRHTASHILAQAVKRLYPEVKLAIGPSIENGFYYDFDAEFSFTPEILEKIEKEMNKIVKENLQLKKFTKSREDAINFMKERNEDYKVELIEDLPEESIISFYEQGDFVDLCAGPHVPSTKEVKAIKLLSVAGAYWRGNENNKMLQRIYGTAFTKKAELEEYLHMLEEAKKRDHRKLGKELGLFDLKEEGPGFPFFYPKGMILRNTLENYWREMHEKAGYGEIRTPIILNEKLWHQSGHWDHYKENMYFTKIDGEDYAIKPMNCPGSILVYKSDLHSYRELPIRLGELGLVHRHEYSGALHGLMRVRNFTQDDAHIFMTKEQITSEILGVIKMIDNFYSLFGFEYFVELSTRPEDSMGSDEDWEAATNGLIKALNEAGLEYKINEGDGAFYGPKIDFHLRDCLGRTWQCGTIQLDFQMPERFDLSYVGADGEKHRPVMAHRVIFGSIERFIGILTEHYAGAFPTWLAPVQVKIMNITDNQVEYCKEIQKVLNENGIRVELDLRNEKIGYKIREAQLQKIPYMLVLGDKEMNEKTIAVRARKQGDLGAMNLTDFVAMVKKEIEEKTNCL.

The 61-residue stretch at 1–61 folds into the TGS domain; that stretch reads MIKITLKDGK…NEDSTLEILT (61 aa). A catalytic region spans residues 242 to 532; it reads DHRKLGKELG…LTEHYAGAFP (291 aa). Zn(2+) contacts are provided by Cys333, His384, and His509.

This sequence belongs to the class-II aminoacyl-tRNA synthetase family. Homodimer. Zn(2+) serves as cofactor.

The protein localises to the cytoplasm. It carries out the reaction tRNA(Thr) + L-threonine + ATP = L-threonyl-tRNA(Thr) + AMP + diphosphate + H(+). Catalyzes the attachment of threonine to tRNA(Thr) in a two-step reaction: L-threonine is first activated by ATP to form Thr-AMP and then transferred to the acceptor end of tRNA(Thr). Also edits incorrectly charged L-seryl-tRNA(Thr). The protein is Threonine--tRNA ligase of Clostridium novyi (strain NT).